A 647-amino-acid polypeptide reads, in one-letter code: Chaperone protein HtpG (647 aa).

The segment at 1-353 is a; substrate-binding; that stretch reads MNAHVEQLEF…AQDMSLNVSR (353 aa). The b stretch occupies residues 354–567; it reads EILQQDRQIK…AFGMTPALAR (214 aa). Residues 568–647 form a c region; it reads IYRASGQEVP…LLAERLARTL (80 aa).

The protein belongs to the heat shock protein 90 family. In terms of assembly, homodimer.

The protein resides in the cytoplasm. In terms of biological role, molecular chaperone. Has ATPase activity. The protein is Chaperone protein HtpG of Mycobacterium bovis (strain ATCC BAA-935 / AF2122/97).